The following is a 423-amino-acid chain: Phosphoribosylamine--glycine ligase (423 aa).

One can recognise an ATP-grasp domain in the interval 107 to 314; it reads KAFMAKYNIP…LSDLVEAAID (208 aa). 133 to 194 serves as a coordination point for ATP; that stretch reads VNQKGAPIVI…EDFLQGEEAS (62 aa). The Mg(2+) site is built by E284 and N286.

Belongs to the GARS family. The cofactor is Mg(2+). Requires Mn(2+) as cofactor.

It catalyses the reaction 5-phospho-beta-D-ribosylamine + glycine + ATP = N(1)-(5-phospho-beta-D-ribosyl)glycinamide + ADP + phosphate + H(+). It participates in purine metabolism; IMP biosynthesis via de novo pathway; N(1)-(5-phospho-D-ribosyl)glycinamide from 5-phospho-alpha-D-ribose 1-diphosphate: step 2/2. This Neisseria meningitidis serogroup A / serotype 4A (strain DSM 15465 / Z2491) protein is Phosphoribosylamine--glycine ligase.